A 529-amino-acid chain; its full sequence is Bifunctional purine biosynthesis protein PurH (529 aa).

The region spanning 2–149 (TDLVPLRRAL…KNHSFVTVLT (148 aa)) is the MGS-like domain.

This sequence belongs to the PurH family.

The catalysed reaction is (6R)-10-formyltetrahydrofolate + 5-amino-1-(5-phospho-beta-D-ribosyl)imidazole-4-carboxamide = 5-formamido-1-(5-phospho-D-ribosyl)imidazole-4-carboxamide + (6S)-5,6,7,8-tetrahydrofolate. It catalyses the reaction IMP + H2O = 5-formamido-1-(5-phospho-D-ribosyl)imidazole-4-carboxamide. It participates in purine metabolism; IMP biosynthesis via de novo pathway; 5-formamido-1-(5-phospho-D-ribosyl)imidazole-4-carboxamide from 5-amino-1-(5-phospho-D-ribosyl)imidazole-4-carboxamide (10-formyl THF route): step 1/1. The protein operates within purine metabolism; IMP biosynthesis via de novo pathway; IMP from 5-formamido-1-(5-phospho-D-ribosyl)imidazole-4-carboxamide: step 1/1. The chain is Bifunctional purine biosynthesis protein PurH from Dinoroseobacter shibae (strain DSM 16493 / NCIMB 14021 / DFL 12).